Reading from the N-terminus, the 273-residue chain is MVFYKYSGSGNDFLIVQSFKKKDFSNLAKQVCHRHEGFGADGLVVVLPSKDYDYEWDFYNSDGSKAGMCGNASRCVGLFAYQHAIAPKEHVFLAGKREISIRIEEPNIIESNLGNYKILDVIPALRCEKFFTNDSVLENIPTFYLIDTGVPHLVGFVKNKEGLNSLNTLELRALRHEFNANINIAFIENKETIFLQTYERGVEDFTLACGTGMAAVFIAARIFYNTPKKAALIPKSNESLELSLKNDGIFYKGAVRYIGMSVLGMRVFENGCF.

Positions 11 and 60 each coordinate substrate. Residue cysteine 69 is the Proton donor of the active site. Substrate is bound by residues 70–71 (GN), asparagine 181, and 199–200 (ER). The Proton acceptor role is filled by cysteine 209. 210 to 211 (GT) is a binding site for substrate.

This sequence belongs to the diaminopimelate epimerase family. As to quaternary structure, homodimer.

It localises to the cytoplasm. The catalysed reaction is (2S,6S)-2,6-diaminopimelate = meso-2,6-diaminopimelate. It participates in amino-acid biosynthesis; L-lysine biosynthesis via DAP pathway; DL-2,6-diaminopimelate from LL-2,6-diaminopimelate: step 1/1. In terms of biological role, catalyzes the stereoinversion of LL-2,6-diaminopimelate (L,L-DAP) to meso-diaminopimelate (meso-DAP), a precursor of L-lysine and an essential component of the bacterial peptidoglycan. This is Diaminopimelate epimerase from Helicobacter pylori (strain HPAG1).